We begin with the raw amino-acid sequence, 308 residues long: Taste receptor type 2 member 107 (308 aa).

Residues 1–7 (MLSAAEG) are Extracellular-facing. A helical membrane pass occupies residues 8 to 28 (ILLCVVTSEAVLGVLGDTFIA). The Cytoplasmic portion of the chain corresponds to 29 to 43 (LANCMEYAKNKKLSK). The helical transmembrane segment at 44–64 (IGFILIGLAISRIGVVWIIIL) threads the bilayer. The Extracellular segment spans residues 65–94 (QGYMQVFFPHILTFGNITEYITYIWVFLNH). Asparagine 80 carries N-linked (GlcNAc...) asparagine glycosylation. A helical transmembrane segment spans residues 95–115 (LSVWFATNLNILYFLKIANFS). Residues 116-127 (NSVFLWLKSRVR) are Cytoplasmic-facing. Residues 128-148 (VVFIFLSGCLLTSWLLCFPQF) traverse the membrane as a helical segment. The Extracellular segment spans residues 149–180 (SKMLNNSKMYWGNTSWLQQQKNVFLINQSLTN). N-linked (GlcNAc...) asparagine glycosylation is found at asparagine 153, asparagine 161, and asparagine 175. Residues 181 to 201 (LGIFFFIIVSLITCFLLIVFL) traverse the membrane as a helical segment. Topologically, residues 202-232 (WRHIRQMHSDGSGLRDLNTEAHVKAMRVLIS) are cytoplasmic. A helical membrane pass occupies residues 233-253 (FAVLFILHFVGLSIQVLCFFL). Topologically, residues 254-258 (PQNNL) are extracellular. The helical transmembrane segment at 259 to 279 (LFITGLIATCLYPCGHSIILI) threads the bilayer. Residues 280-308 (LGNKQLKQASLKALQHLTCCETKRNLSVT) are Cytoplasmic-facing.

This sequence belongs to the G-protein coupled receptor T2R family.

Its subcellular location is the membrane. In terms of biological role, putative taste receptor which may play a role in the perception of bitterness. The chain is Taste receptor type 2 member 107 from Rattus norvegicus (Rat).